We begin with the raw amino-acid sequence, 166 residues long: Protein-export protein SecB (166 aa).

This sequence belongs to the SecB family. As to quaternary structure, homotetramer, a dimer of dimers. One homotetramer interacts with 1 SecA dimer.

The protein localises to the cytoplasm. Functionally, one of the proteins required for the normal export of preproteins out of the cell cytoplasm. It is a molecular chaperone that binds to a subset of precursor proteins, maintaining them in a translocation-competent state. It also specifically binds to its receptor SecA. The polypeptide is Protein-export protein SecB (Actinobacillus pleuropneumoniae serotype 5b (strain L20)).